A 125-amino-acid polypeptide reads, in one-letter code: Ribosome-binding factor A (125 aa).

Belongs to the RbfA family. In terms of assembly, monomer. Binds 30S ribosomal subunits, but not 50S ribosomal subunits or 70S ribosomes.

It is found in the cytoplasm. In terms of biological role, one of several proteins that assist in the late maturation steps of the functional core of the 30S ribosomal subunit. Associates with free 30S ribosomal subunits (but not with 30S subunits that are part of 70S ribosomes or polysomes). Required for efficient processing of 16S rRNA. May interact with the 5'-terminal helix region of 16S rRNA. This Carboxydothermus hydrogenoformans (strain ATCC BAA-161 / DSM 6008 / Z-2901) protein is Ribosome-binding factor A.